The sequence spans 772 residues: Tubulin monoglycylase TTLL3 (772 aa).

The segment at 50–81 (PTLLPPQKDLDSSAMGDSDTTEDEDEDEDEEF) is disordered. Over residues 68–81 (DTTEDEDEDEDEEF) the composition is skewed to acidic residues. The region spanning 151-510 (ARNVLKLVVK…RMLDRNCDTG (360 aa)) is the TTL domain. Residues lysine 283, 289 to 290 (RG), 321 to 324 (QKYI), 334 to 336 (KFD), and 378 to 379 (CN) contribute to the ATP site. Arginine 289 provides a ligand contact to a protein. Serine 381 is a binding site for L-glutamate. Mg(2+)-binding residues include aspartate 456, glutamate 469, and asparagine 471. Glutamate 469 is an ATP binding site.

Mg(2+) is required as a cofactor. As to expression, expressed in brain, heart, kidney, testis, liver, lung, muscle, spleen, trachea and colon.

The protein resides in the cytoplasm. Its subcellular location is the cytoskeleton. It is found in the cell projection. The protein localises to the cilium. It localises to the cilium axoneme. The protein resides in the flagellum axoneme. The enzyme catalyses L-glutamyl-[protein] + glycine + ATP = glycyl-L-glutamyl-[protein] + ADP + phosphate + H(+). Monoglycylase which modifies alpha- and beta-tubulin, adding a single glycine on the gamma-carboxyl groups of specific glutamate residues to generate monoglycine side chains within the C-terminal tail of tubulin. Not involved in elongation step of the polyglycylation reaction. Preferentially glycylates a beta-tail peptide over the alpha-tail, although shifts its preference toward alpha-tail as beta-tail glutamylation increases. Competes with polyglutamylases for modification site on beta-tubulin substrate, thereby creating an anticorrelation between glycylation and glutamylation reactions. Together with TTLL8, mediates microtubule glycylation of primary and motile cilia, which is essential for their stability and maintenance. Involved in microtubule glycylation of primary cilia in colon which controls cell proliferation of epithelial cells and plays an essential role in colon cancer development. Together with TTLL8, glycylates sperm flagella which regulates axonemal dynein motor activity, thereby controlling flagellar beat, directional sperm swimming and male fertility. This is Tubulin monoglycylase TTLL3 from Homo sapiens (Human).